Consider the following 292-residue polypeptide: Malonyl-[acyl-carrier protein] O-methyltransferase (292 aa).

Belongs to the methyltransferase superfamily.

It carries out the reaction malonyl-[ACP] + S-adenosyl-L-methionine = malonyl-[ACP] methyl ester + S-adenosyl-L-homocysteine. The protein operates within cofactor biosynthesis; biotin biosynthesis. Its function is as follows. Converts the free carboxyl group of a malonyl-thioester to its methyl ester by transfer of a methyl group from S-adenosyl-L-methionine (SAM). It allows to synthesize pimeloyl-ACP via the fatty acid synthetic pathway. In Alcanivorax borkumensis (strain ATCC 700651 / DSM 11573 / NCIMB 13689 / SK2), this protein is Malonyl-[acyl-carrier protein] O-methyltransferase.